Consider the following 238-residue polypeptide: Uridylate kinase (238 aa).

Position 12–15 (12–15 (KLSG)) interacts with ATP. Glycine 54 is a binding site for UMP. 2 residues coordinate ATP: glycine 55 and arginine 59. Residues aspartate 74 and 135-142 (TGNPFFTT) each bind UMP. Residues threonine 162, tyrosine 168, and aspartate 171 each contribute to the ATP site.

It belongs to the UMP kinase family. Homohexamer.

Its subcellular location is the cytoplasm. The enzyme catalyses UMP + ATP = UDP + ADP. It functions in the pathway pyrimidine metabolism; CTP biosynthesis via de novo pathway; UDP from UMP (UMPK route): step 1/1. Its activity is regulated as follows. Inhibited by UTP. In terms of biological role, catalyzes the reversible phosphorylation of UMP to UDP. In Nitrosospira multiformis (strain ATCC 25196 / NCIMB 11849 / C 71), this protein is Uridylate kinase.